Here is an 859-residue protein sequence, read N- to C-terminus: Ribose import ATP-binding protein RbsA 1 (859 aa).

The disordered stretch occupies residues 1–351; it reads MRASLENGDD…AARAPDEASE (351 aa). The tract at residues 1–353 is unknown; that stretch reads MRASLENGDD…RAPDEASEEA (353 aa). The span at 8–17 shows a compositional bias: basic and acidic residues; the sequence is GDDHDAHRLV. Over residues 28 to 43 the composition is skewed to basic residues; the sequence is RAARRRAFARARRGER. 3 stretches are compositionally biased toward basic and acidic residues: residues 44–80, 89–129, and 137–167; these read RARG…DRRA, RREQ…EEGG, and RERE…EGDR. A compositionally biased stretch (basic residues) spans 168–179; sequence RRRRSRDPRRHP. Basic and acidic residues-rich tracts occupy residues 193–214, 239–250, 263–281, 288–301, and 308–323; these read GARE…GARE, RLDGRAVRDRGV, AGGD…RDVR, DSPR…EEVG, and DSGR…REDV. ABC transporter domains follow at residues 358-594 and 607-851; these read LALT…VGRR and RDAA…TSDV. Position 390 to 397 (390 to 397) interacts with ATP; that stretch reads GENGAGKS.

It belongs to the ABC transporter superfamily. Ribose importer (TC 3.A.1.2.1) family. The complex is composed of an ATP-binding protein (RbsA), two transmembrane proteins (RbsC) and a solute-binding protein (RbsB).

It is found in the cell inner membrane. The enzyme catalyses D-ribose(out) + ATP + H2O = D-ribose(in) + ADP + phosphate + H(+). Its function is as follows. Part of the ABC transporter complex RbsABC involved in ribose import. Responsible for energy coupling to the transport system. This Burkholderia pseudomallei (strain 1710b) protein is Ribose import ATP-binding protein RbsA 1.